The chain runs to 405 residues: MATVEELQTRVKQLEEELERERTRNRGGTDGGGGRKKIDQMSSEVVDSNPYSRLMALKRMGIVDNYERIRDFTVAIVGVGGVGSVTAEMLTRCGIGKLLLFDYDKVELANMNRLFFQPHQAGLSKVQAAEITLRDINPDVEFETHNYNITTVDNFQHFMDRISHGHLKGDRPVDLVLSCVDNFEARMAINTACNEQGQVWIESGVSENAVSGHIQVIKPGETACFACAPPLVVASGIDEKTLKREGVCAASLPTTMGIVAGFLVQNTLKYLLEFGSVTYYLGYNAMQDFFPSMAMKPNPNCDDSFCTKLQTEYQEKLLAQPKEEAKEETVEEVVHDANDWGIELVAETTEEELKAASHGHVPELVEGVHVAYVRPMTQEDEEGAAGLTVDDQESLEDLMAKMKSI.

The interval 1 to 44 (MATVEELQTRVKQLEEELERERTRNRGGTDGGGGRKKIDQMSSE) is disordered. Basic and acidic residues predominate over residues 7 to 24 (LQTRVKQLEEELERERTR). Residues glycine 81, aspartate 102, lysine 125, asparagine 148, and asparagine 182 each coordinate ATP. Residues cysteine 224 and cysteine 227 each contribute to the Zn(2+) site. Cysteine 248 functions as the Glycyl thioester intermediate in the catalytic mechanism. 2 residues coordinate Zn(2+): cysteine 301 and cysteine 306. A linker region spans residues 346 to 377 (AETTEEELKAASHGHVPELVEGVHVAYVRPMT). Residues 390–405 (DDQESLEDLMAKMKSI) carry the UFC1-binding sequence (UFC) motif.

The protein belongs to the ubiquitin-activating E1 family. UBA5 subfamily. Homodimer; homodimerization is required for UFM1 activation. Interacts (via UIS motif) with UFM1; binds UFM1 via a trans-binding mechanism in which UFM1 interacts with distinct sites in both subunits of the UBA5 homodimer. Interacts (via C-terminus) with UFC1.

Its subcellular location is the cytoplasm. It is found in the nucleus. The protein localises to the endoplasmic reticulum membrane. The protein resides in the golgi apparatus. Functionally, E1-like enzyme which specifically catalyzes the first step in ufmylation. Activates UFM1 by first adenylating its C-terminal glycine residue with ATP, and thereafter linking this residue to the side chain of a cysteine residue in E1, yielding a UFM1-E1 thioester and free AMP. Activates UFM1 via a trans-binding mechanism, in which UFM1 interacts with distinct sites in both subunits of the UBA5 homodimer. Trans-binding also promotes stabilization of the UBA5 homodimer, and enhances ATP-binding. Transfer of UFM1 from UBA5 to the E2-like enzyme UFC1 also takes place using a trans mechanism. The chain is Ubiquitin-like modifier-activating enzyme 5 from Branchiostoma floridae (Florida lancelet).